The primary structure comprises 296 residues: Carboxylesterase YbfK (296 aa).

Active-site charge relay system residues include Ser-129, Glu-244, and His-273.

Belongs to the AB hydrolase superfamily.

The protein localises to the cytoplasm. The enzyme catalyses a carboxylic ester + H2O = an alcohol + a carboxylate + H(+). Its function is as follows. Shows carboxylesterase activity in vitro. This Bacillus subtilis (strain 168) protein is Carboxylesterase YbfK (ybfK).